Consider the following 281-residue polypeptide: Protein NipSnap homolog 2 (281 aa).

The N-terminal 27 residues, 1-27 (MAARVLLARGGLLRPAAQSAFLPGLRT), are a transit peptide targeting the mitochondrion.

This sequence belongs to the NipSnap family. As to quaternary structure, interacts with CALCOCO2/NDP52, NBR1, SQSTM1/p62, TAX1BP1 and WDFY3/ALFY. Interacts with ATG8 family proteins (MAP1LC3A, MAP1LC3B, MAP1LC3C, GABARAP, GABARAPL1 and GABARAPL2). Interacts with VDAC1.

The protein localises to the mitochondrion matrix. It is found in the cytoplasm. Protein involved in mitophagy by facilitating recruitment of the autophagy machinery required for clearance of damaged mitochondria. Accumulates on the mitochondria surface in response to mitochondrial depolarization and acts as a 'eat me' signal by recruiting proteins involved in selective autophagy, such as autophagy receptors (CALCOCO2/NDP52, NBR1, SQSTM1/p62, TAX1BP1 and WDFY3/ALFY) and ATG8 family proteins (MAP1LC3A, MAP1LC3B, MAP1LC3C, GABARAP, GABARAPL1 and GABARAPL2). May act as a positive regulator of L-type calcium channels. This chain is Protein NipSnap homolog 2, found in Mus musculus (Mouse).